We begin with the raw amino-acid sequence, 338 residues long: POU domain, class 4, transcription factor 3 (338 aa).

The POU-IV box signature appears at 56-65 (RAEALAAVDI). Residues 91-112 (TSPTVPISHPAALTSHPHHPVH) are disordered. Residues 179 to 256 (DVESDPRELE…VLQAWLEEAE (78 aa)) enclose the POU-specific domain. Residues 274–333 (RKRKRTSIAAPEKRSLEAYFAIQPRPSSEKIAAIAEKLDLKKNVVRVWFCNQRQKQKRMK) constitute a DNA-binding region (homeobox).

This sequence belongs to the POU transcription factor family. Interacts with ISL1. As to expression, expressed in the chochlea of the inner ear.

The protein localises to the nucleus. The protein resides in the cytoplasm. Functionally, acts as a transcriptional activator. Acts by binding to sequences related to the consensus octamer motif 5'-ATGCAAAT-3' in the regulatory regions of its target genes. Involved in the auditory system development, required for terminal differentiation of hair cells in the inner ear. The protein is POU domain, class 4, transcription factor 3 of Rattus norvegicus (Rat).